Here is a 143-residue protein sequence, read N- to C-terminus: Nucleoside diphosphate kinase (143 aa).

ATP-binding residues include Lys-11, Phe-59, Arg-87, Thr-93, Arg-104, and Asn-114. The active-site Pros-phosphohistidine intermediate is His-117.

The protein belongs to the NDK family. As to quaternary structure, homotetramer. Mg(2+) serves as cofactor.

It localises to the cytoplasm. The catalysed reaction is a 2'-deoxyribonucleoside 5'-diphosphate + ATP = a 2'-deoxyribonucleoside 5'-triphosphate + ADP. It carries out the reaction a ribonucleoside 5'-diphosphate + ATP = a ribonucleoside 5'-triphosphate + ADP. Its function is as follows. Major role in the synthesis of nucleoside triphosphates other than ATP. The ATP gamma phosphate is transferred to the NDP beta phosphate via a ping-pong mechanism, using a phosphorylated active-site intermediate. This Shewanella oneidensis (strain ATCC 700550 / JCM 31522 / CIP 106686 / LMG 19005 / NCIMB 14063 / MR-1) protein is Nucleoside diphosphate kinase.